A 175-amino-acid polypeptide reads, in one-letter code: Crossover junction endodeoxyribonuclease RuvC (175 aa).

Active-site residues include Asp16, Glu76, and Asp148. 3 residues coordinate Mg(2+): Asp16, Glu76, and Asp148.

Belongs to the RuvC family. Homodimer which binds Holliday junction (HJ) DNA. The HJ becomes 2-fold symmetrical on binding to RuvC with unstacked arms; it has a different conformation from HJ DNA in complex with RuvA. In the full resolvosome a probable DNA-RuvA(4)-RuvB(12)-RuvC(2) complex forms which resolves the HJ. Mg(2+) is required as a cofactor.

Its subcellular location is the cytoplasm. It carries out the reaction Endonucleolytic cleavage at a junction such as a reciprocal single-stranded crossover between two homologous DNA duplexes (Holliday junction).. The RuvA-RuvB-RuvC complex processes Holliday junction (HJ) DNA during genetic recombination and DNA repair. Endonuclease that resolves HJ intermediates. Cleaves cruciform DNA by making single-stranded nicks across the HJ at symmetrical positions within the homologous arms, yielding a 5'-phosphate and a 3'-hydroxyl group; requires a central core of homology in the junction. The consensus cleavage sequence is 5'-(A/T)TT(C/G)-3'. Cleavage occurs on the 3'-side of the TT dinucleotide at the point of strand exchange. HJ branch migration catalyzed by RuvA-RuvB allows RuvC to scan DNA until it finds its consensus sequence, where it cleaves and resolves the cruciform DNA. This Bradyrhizobium sp. (strain BTAi1 / ATCC BAA-1182) protein is Crossover junction endodeoxyribonuclease RuvC.